The chain runs to 177 residues: Co-chaperone protein HscB homolog (177 aa).

One can recognise a J domain in the interval 8-80 (DFFALFGLPR…LPRAQYMLEL (73 aa)).

The protein belongs to the HscB family. As to quaternary structure, interacts with HscA and stimulates its ATPase activity.

Functionally, co-chaperone involved in the maturation of iron-sulfur cluster-containing proteins. Seems to help targeting proteins to be folded toward HscA. This chain is Co-chaperone protein HscB homolog, found in Aromatoleum aromaticum (strain DSM 19018 / LMG 30748 / EbN1) (Azoarcus sp. (strain EbN1)).